Consider the following 361-residue polypeptide: Chorismate synthase (361 aa).

Arg48 and Arg54 together coordinate NADP(+). FMN contacts are provided by residues 125–127 (RSS), 238–239 (NA), Gly278, 293–297 (KPTSS), and Arg319.

This sequence belongs to the chorismate synthase family. In terms of assembly, homotetramer. Requires FMNH2 as cofactor.

It catalyses the reaction 5-O-(1-carboxyvinyl)-3-phosphoshikimate = chorismate + phosphate. Its pathway is metabolic intermediate biosynthesis; chorismate biosynthesis; chorismate from D-erythrose 4-phosphate and phosphoenolpyruvate: step 7/7. In terms of biological role, catalyzes the anti-1,4-elimination of the C-3 phosphate and the C-6 proR hydrogen from 5-enolpyruvylshikimate-3-phosphate (EPSP) to yield chorismate, which is the branch point compound that serves as the starting substrate for the three terminal pathways of aromatic amino acid biosynthesis. This reaction introduces a second double bond into the aromatic ring system. This chain is Chorismate synthase, found in Shigella boydii serotype 18 (strain CDC 3083-94 / BS512).